The sequence spans 82 residues: NAD(P)H-quinone oxidoreductase subunit O (82 aa).

Belongs to the complex I NdhO subunit family. In terms of assembly, NDH-1 can be composed of about 15 different subunits; different subcomplexes with different compositions have been identified which probably have different functions.

The protein resides in the cellular thylakoid membrane. The catalysed reaction is a plastoquinone + NADH + (n+1) H(+)(in) = a plastoquinol + NAD(+) + n H(+)(out). It catalyses the reaction a plastoquinone + NADPH + (n+1) H(+)(in) = a plastoquinol + NADP(+) + n H(+)(out). In terms of biological role, NDH-1 shuttles electrons from an unknown electron donor, via FMN and iron-sulfur (Fe-S) centers, to quinones in the respiratory and/or the photosynthetic chain. The immediate electron acceptor for the enzyme in this species is believed to be plastoquinone. Couples the redox reaction to proton translocation, and thus conserves the redox energy in a proton gradient. Cyanobacterial NDH-1 also plays a role in inorganic carbon-concentration. The sequence is that of NAD(P)H-quinone oxidoreductase subunit O from Prochlorococcus marinus (strain MIT 9211).